The chain runs to 109 residues: uncharacterized protein (109 aa).

The N-terminal stretch at 1 to 21 is a signal peptide; sequence MEKSICTSVLVLGLFISSAIG.

In terms of tissue distribution, prismatic layer of shell (at protein level). Expressed primarily in the mantle with highest level in the mantle edge and lower level in the mantle pallium.

It is found in the secreted. This is an uncharacterized protein from Margaritifera margaritifera (Freshwater pearl mussel).